Reading from the N-terminus, the 243-residue chain is tRNA (guanine-N(1)-)-methyltransferase (243 aa).

Residues Gly108 and 127–132 (LGDYVL) each bind S-adenosyl-L-methionine.

This sequence belongs to the RNA methyltransferase TrmD family. In terms of assembly, homodimer.

It localises to the cytoplasm. It catalyses the reaction guanosine(37) in tRNA + S-adenosyl-L-methionine = N(1)-methylguanosine(37) in tRNA + S-adenosyl-L-homocysteine + H(+). Functionally, specifically methylates guanosine-37 in various tRNAs. The polypeptide is tRNA (guanine-N(1)-)-methyltransferase (Streptococcus gordonii (strain Challis / ATCC 35105 / BCRC 15272 / CH1 / DL1 / V288)).